Reading from the N-terminus, the 245-residue chain is MADS-box transcription factor 55 (245 aa).

In terms of domain architecture, MADS-box spans 1–61 (MARERREIRR…GKLSQFASSN (61 aa)). In terms of domain architecture, K-box spans 109–199 (LQLEHSKCSS…RDQMPQVPTA (91 aa)). Residues 197-245 (PTAGLAVPDTENVLTEDGQSSESVMTALNSGSSQDNDDGSDISLKLGLP) are disordered. Residues 213–224 (DGQSSESVMTAL) are compositionally biased toward polar residues.

In terms of tissue distribution, expressed in roots, shoots and developing panicles. Expressed in shoots.

The protein resides in the nucleus. In terms of biological role, transcription factor that acts as a negative regulator of brassinosteroid signaling. This Oryza sativa subsp. japonica (Rice) protein is MADS-box transcription factor 55 (MADS55).